A 597-amino-acid chain; its full sequence is Probable translation initiation factor IF-2 (597 aa).

The tr-type G domain maps to 13–229 (LRTPIVCVMG…LLGLAQKFLE (217 aa)). A G1 region spans residues 22-29 (GHVDHGKT). 22–29 (GHVDHGKT) contributes to the GTP binding site. The segment at 47-51 (AITQH) is G2. The segment at 84–87 (DTPG) is G3. GTP is bound by residues 84–88 (DTPGH) and 138–141 (NKID). A G4 region spans residues 138–141 (NKID). The segment at 206–208 (SAV) is G5.

This sequence belongs to the TRAFAC class translation factor GTPase superfamily. Classic translation factor GTPase family. IF-2 subfamily.

Its function is as follows. Function in general translation initiation by promoting the binding of the formylmethionine-tRNA to ribosomes. Seems to function along with eIF-2. The sequence is that of Probable translation initiation factor IF-2 from Methanosarcina acetivorans (strain ATCC 35395 / DSM 2834 / JCM 12185 / C2A).